Consider the following 272-residue polypeptide: Enoyl-[acyl-carrier-protein] reductase [NADH] 1 (272 aa).

NAD(+) is bound by residues Gly-17, Ser-23 to Ile-24, Gln-44, Asp-68 to Val-69, and Ile-96. Catalysis depends on proton acceptor residues Tyr-149 and Tyr-159. NAD(+) contacts are provided by residues Lys-166 and Ile-195–Ala-199.

The protein belongs to the short-chain dehydrogenases/reductases (SDR) family. FabI subfamily.

It is found in the cell inner membrane. It catalyses the reaction a 2,3-saturated acyl-[ACP] + NAD(+) = a (2E)-enoyl-[ACP] + NADH + H(+). The protein operates within lipid metabolism; fatty acid biosynthesis. In Rhizobium meliloti (strain 1021) (Ensifer meliloti), this protein is Enoyl-[acyl-carrier-protein] reductase [NADH] 1 (fabI1).